The sequence spans 260 residues: Lysozyme D (260 aa).

The first 19 residues, 1–19 (MRLLVTLILLIFVLTVSGQ), serve as a signal peptide directing secretion. The interval 83–148 (GSTTTGGTGS…SGGSSGSGSG (66 aa)) is disordered. Gly residues-rich tracts occupy residues 101–119 (SGSG…GSGT) and 129–147 (SGSG…GSGS).

This sequence belongs to the dictyostelium lysozyme family. Contains disulfide bonds.

The protein resides in the cytoplasmic vesicle lumen. It catalyses the reaction Hydrolysis of (1-&gt;4)-beta-linkages between N-acetylmuramic acid and N-acetyl-D-glucosamine residues in a peptidoglycan and between N-acetyl-D-glucosamine residues in chitodextrins.. Functionally, has antibacterial activity. This chain is Lysozyme D (alyD-1), found in Dictyostelium discoideum (Social amoeba).